Reading from the N-terminus, the 268-residue chain is Zinc finger protein SNAI2 (268 aa).

The interval 1-20 (MPRSFLVKKHFNASKKPNYS) is SNAG domain. Residues 80 to 117 (PASLGRVSPPPPSDTSSKDHSGSESPISDEEERLQSKL) are disordered. 4 C2H2-type zinc fingers span residues 128–150 (FQCNLCNKTYSTFSGLGKHKQLH), 159–181 (FSCKYCDKEYVSLGALKMHIRTH), 185–207 (CVCKICGKAFSRPWLLQGHIRTH), and 213–235 (FSCSHCSRAFADRSNLRAHLQTH). Residues 241–264 (YQCKSCSKTFSRMSLLHKHEESGC) form a C2H2-type 5; atypical zinc finger.

This sequence belongs to the snail C2H2-type zinc-finger protein family. As to quaternary structure, interacts (via SNAG domain) with LIMD1 (via LIM domains), WTIP (via LIM domains) and AJUBA (via LIM domains). Interacts (via zinc fingers) with KPNA2, KPNB1, and TNPO1. May interact (via zinc fingers) with IPO7. Phosphorylated by GSK3B. Once phosphorylated, it becomes a target for ubiquitination. In terms of processing, ubiquitinated by the SCF(FBXO11) complex; ubiquitination requires previous GSK3B-mediated SNAI2 phosphorylation.

Its subcellular location is the nucleus. It is found in the cytoplasm. In terms of biological role, transcriptional repressor that modulates both activator-dependent and basal transcription. Involved in the generation and migration of neural crest cells. Plays a role in mediating RAF1-induced transcriptional repression of the TJ protein, occludin (OCLN) and subsequent oncogenic transformation of epithelial cells. Represses BRCA2 expression by binding to its E2-box-containing silencer and recruiting CTBP1 and HDAC1 in breast cells. In epidermal keratinocytes, binds to the E-box in ITGA3 promoter and represses its transcription. Involved in the regulation of ITGB1 and ITGB4 expression and cell adhesion and proliferation in epidermal keratinocytes. Binds to E-box2 domain of BSG and activates its expression during TGFB1-induced epithelial-mesenchymal transition (EMT) in hepatocytes. Represses E-Cadherin/CDH1 transcription via E-box elements. Involved in osteoblast maturation. Binds to RUNX2 and SOC9 promoters and may act as a positive and negative transcription regulator, respectively, in osteoblasts. Binds to CXCL12 promoter via E-box regions in mesenchymal stem cells and osteoblasts. Plays an essential role in TWIST1-induced EMT and its ability to promote invasion and metastasis. The chain is Zinc finger protein SNAI2 (SNAI2) from Bos taurus (Bovine).